A 235-amino-acid polypeptide reads, in one-letter code: Ubiquinone biosynthesis O-methyltransferase (235 aa).

S-adenosyl-L-methionine contacts are provided by R39, G59, D80, and M124.

Belongs to the methyltransferase superfamily. UbiG/COQ3 family.

The catalysed reaction is a 3-demethylubiquinol + S-adenosyl-L-methionine = a ubiquinol + S-adenosyl-L-homocysteine + H(+). It catalyses the reaction a 3-(all-trans-polyprenyl)benzene-1,2-diol + S-adenosyl-L-methionine = a 2-methoxy-6-(all-trans-polyprenyl)phenol + S-adenosyl-L-homocysteine + H(+). The protein operates within cofactor biosynthesis; ubiquinone biosynthesis. In terms of biological role, O-methyltransferase that catalyzes the 2 O-methylation steps in the ubiquinone biosynthetic pathway. This Photobacterium profundum (strain SS9) protein is Ubiquinone biosynthesis O-methyltransferase.